The primary structure comprises 556 residues: Phenylalanine--tRNA ligase beta subunit (556 aa).

The B5 domain occupies 278–353 (LTPKRFEVEL…IAYGYNNIEP (76 aa)). Mg(2+) is bound by residues D331, D337, E340, and D341.

It belongs to the phenylalanyl-tRNA synthetase beta subunit family. Type 2 subfamily. Tetramer of two alpha and two beta subunits. Mg(2+) serves as cofactor.

It localises to the cytoplasm. It carries out the reaction tRNA(Phe) + L-phenylalanine + ATP = L-phenylalanyl-tRNA(Phe) + AMP + diphosphate + H(+). The chain is Phenylalanine--tRNA ligase beta subunit from Pyrococcus abyssi (strain GE5 / Orsay).